A 456-amino-acid polypeptide reads, in one-letter code: Cysteine--tRNA ligase (456 aa).

Cys-28 contacts Zn(2+). The short motif at 30-40 (ITVYDHCHLGH) is the 'HIGH' region element. The Zn(2+) site is built by Cys-209, His-234, and Glu-238. A 'KMSKS' region motif is present at residues 266–270 (KMAKS). Lys-269 is a binding site for ATP.

The protein belongs to the class-I aminoacyl-tRNA synthetase family. As to quaternary structure, monomer. Zn(2+) serves as cofactor.

The protein resides in the cytoplasm. The enzyme catalyses tRNA(Cys) + L-cysteine + ATP = L-cysteinyl-tRNA(Cys) + AMP + diphosphate. This chain is Cysteine--tRNA ligase, found in Legionella pneumophila subsp. pneumophila (strain Philadelphia 1 / ATCC 33152 / DSM 7513).